Reading from the N-terminus, the 272-residue chain is Alkaline ceramidase (272 aa).

2 helical membrane passes run 34-54 (FANTCTNLPIIVLPLVNIMLL) and 61-81 (VNGGLVFPQLLLTFNGLASTY). Residue H83 coordinates Zn(2+). 4 helical membrane passes run 96–116 (LSLVWIITVFLVVYIPVMKWF), 124–144 (LTVVRWVVLIVTAVVSALCFL), 148–168 (LNAIALMLFSIPAAVVIRYEG), and 183–203 (ILALWGVAFSFWFADRLLCDF). Residues H213 and H217 each coordinate Zn(2+). A helical membrane pass occupies residues 214-234 (ALFHLLAGLAGYTIFIMFSMI). An N-linked (GlcNAc...) asparagine glycan is attached at N256.

The protein belongs to the alkaline ceramidase family. Zn(2+) serves as cofactor.

The protein resides in the membrane. It catalyses the reaction an N-acylsphing-4-enine + H2O = sphing-4-enine + a fatty acid. Functionally, hydrolyzes the sphingolipid ceramide into sphingosine and free fatty acid. This Caenorhabditis briggsae protein is Alkaline ceramidase.